The chain runs to 370 residues: Anhydro-N-acetylmuramic acid kinase (370 aa).

Residue 13-20 (GTSMDGVD) participates in ATP binding.

It belongs to the anhydro-N-acetylmuramic acid kinase family.

The catalysed reaction is 1,6-anhydro-N-acetyl-beta-muramate + ATP + H2O = N-acetyl-D-muramate 6-phosphate + ADP + H(+). The protein operates within amino-sugar metabolism; 1,6-anhydro-N-acetylmuramate degradation. It participates in cell wall biogenesis; peptidoglycan recycling. Functionally, catalyzes the specific phosphorylation of 1,6-anhydro-N-acetylmuramic acid (anhMurNAc) with the simultaneous cleavage of the 1,6-anhydro ring, generating MurNAc-6-P. Is required for the utilization of anhMurNAc either imported from the medium or derived from its own cell wall murein, and thus plays a role in cell wall recycling. The chain is Anhydro-N-acetylmuramic acid kinase from Shewanella frigidimarina (strain NCIMB 400).